Here is a 145-residue protein sequence, read N- to C-terminus: MAEVEQKKKRTFRKFTYRGVDLDQLLDMSYEQLMQLYSARQRRRLSRGLRRKQHSLLKRLRKAKKEAPPMEKPEVVKTHLRDMIILPEMVGSMVGVYNGKTFNQVEIKPEMIGHYLGEFSITYKPVKHGRPGIGATHSSRFIPLK.

Residue Ala-2 is modified to N-acetylalanine. Residue Lys-108 forms a Glycyl lysine isopeptide (Lys-Gly) (interchain with G-Cter in SUMO2) linkage.

It belongs to the universal ribosomal protein uS19 family. As to quaternary structure, component of the small ribosomal subunit.

It localises to the cytoplasm. Functionally, component of the small ribosomal subunit. The ribosome is a large ribonucleoprotein complex responsible for the synthesis of proteins in the cell. This Oryctolagus cuniculus (Rabbit) protein is Small ribosomal subunit protein uS19 (RPS15).